The primary structure comprises 344 residues: Serine/threonine-protein kinase ppk13 (344 aa).

ATP-binding positions include 38–46 (LGEGGFAFV) and K61. The Protein kinase domain maps to 76-344 (MKEADYHRKF…LSKIDLQINQ (269 aa)). Residue H192 is the Proton acceptor of the active site.

It belongs to the protein kinase superfamily. Ser/Thr protein kinase family.

Its subcellular location is the endoplasmic reticulum. The protein localises to the golgi apparatus. It catalyses the reaction L-seryl-[protein] + ATP = O-phospho-L-seryl-[protein] + ADP + H(+). The catalysed reaction is L-threonyl-[protein] + ATP = O-phospho-L-threonyl-[protein] + ADP + H(+). The sequence is that of Serine/threonine-protein kinase ppk13 (ppk13) from Schizosaccharomyces pombe (strain 972 / ATCC 24843) (Fission yeast).